A 134-amino-acid chain; its full sequence is ATP synthase epsilon chain (134 aa).

Belongs to the ATPase epsilon chain family. In terms of assembly, F-type ATPases have 2 components, CF(1) - the catalytic core - and CF(0) - the membrane proton channel. CF(1) has five subunits: alpha(3), beta(3), gamma(1), delta(1), epsilon(1). CF(0) has three main subunits: a, b and c. In this bacterium the a and b subunits are transcribed but do not seem to be translated, thus the ATP synthase consists of the alpha, beta, gamma, delta, epsilon and c subunits.

The protein localises to the cell membrane. Its function is as follows. Produces ATP from ADP in the presence of a proton gradient across the membrane. This chain is ATP synthase epsilon chain, found in Moorella thermoacetica (strain ATCC 39073 / JCM 9320).